The chain runs to 307 residues: Acetaldehyde dehydrogenase 1 (307 aa).

Cys132 acts as the Acyl-thioester intermediate in catalysis. Residues 163-171 (SVGPGTRKN) and Asn274 each bind NAD(+).

It belongs to the acetaldehyde dehydrogenase family.

The catalysed reaction is acetaldehyde + NAD(+) + CoA = acetyl-CoA + NADH + H(+). The sequence is that of Acetaldehyde dehydrogenase 1 (tesF) from Comamonas testosteroni (Pseudomonas testosteroni).